We begin with the raw amino-acid sequence, 700 residues long: Peroxisomal acyl-coenzyme A oxidase 3 (700 aa).

Position 2 is an N-acetylalanine (Ala-2). At Thr-281 the chain carries Phosphothreonine. The short motif at 698–700 is the Microbody targeting signal element; the sequence is SKL.

Belongs to the acyl-CoA oxidase family. The cofactor is FAD.

It is found in the peroxisome. The enzyme catalyses a 2,3-saturated acyl-CoA + O2 = a (2E)-enoyl-CoA + H2O2. It catalyses the reaction (2S)-pristanoyl-CoA + O2 = (2E)-pristenoyl-CoA + H2O2. The catalysed reaction is tetracosanoyl-CoA + O2 = (2E)-tetracosenoyl-CoA + H2O2. It carries out the reaction hexadecanoyl-CoA + O2 = (2E)-hexadecenoyl-CoA + H2O2. The enzyme catalyses hexadecanedioyl-CoA + O2 = (2E)-hexadecenedioyl-CoA + H2O2. Its pathway is lipid metabolism; peroxisomal fatty acid beta-oxidation. Its function is as follows. Oxidizes the CoA-esters of 2-methyl-branched fatty acids. In Homo sapiens (Human), this protein is Peroxisomal acyl-coenzyme A oxidase 3 (ACOX3).